We begin with the raw amino-acid sequence, 368 residues long: Mitogen-activated protein kinase HOG1B (368 aa).

The 280-residue stretch at 20 to 299 (YVNLEPVGMG…ASQALAHPYL (280 aa)) folds into the Protein kinase domain. ATP-binding positions include 26-34 (VGMGAFGLV) and lysine 49. Residue aspartate 141 is the Proton acceptor of the active site. A Phosphothreonine modification is found at threonine 171. Positions 171 to 173 (TGY) match the TXY motif. Tyrosine 173 carries the phosphotyrosine modification.

This sequence belongs to the protein kinase superfamily. Ser/Thr protein kinase family. MAP kinase subfamily. HOG1 sub-subfamily. Mg(2+) serves as cofactor. Phosphorylated. Dually phosphorylated on Thr-171 and Tyr-173, which activates the enzyme. Rapidly dephosphorylated upon either hypo- or hyperosmotic shock.

It is found in the cytoplasm. The protein localises to the nucleus. The enzyme catalyses L-seryl-[protein] + ATP = O-phospho-L-seryl-[protein] + ADP + H(+). It catalyses the reaction L-threonyl-[protein] + ATP = O-phospho-L-threonyl-[protein] + ADP + H(+). With respect to regulation, activated by tyrosine and threonine phosphorylation. Mitogen-activated protein kinase involved in a signal transduction pathway that is activated by changes in the osmolarity of the extracellular environment. Controls osmotic regulation of transcription of target genes. In Wallemia ichthyophaga (strain EXF-994 / CBS 113033), this protein is Mitogen-activated protein kinase HOG1B (HOG1B).